A 38-amino-acid chain; its full sequence is Large ribosomal subunit protein bL36 (38 aa).

Belongs to the bacterial ribosomal protein bL36 family.

This is Large ribosomal subunit protein bL36 from Pelodictyon phaeoclathratiforme (strain DSM 5477 / BU-1).